We begin with the raw amino-acid sequence, 107 residues long: Putative double-stranded DNA mimic protein PC1_1990 (107 aa).

The protein belongs to the putative dsDNA mimic protein family.

May act as a double-stranded DNA (dsDNA) mimic. Probably regulates the activity of a dsDNA-binding protein. The protein is Putative double-stranded DNA mimic protein PC1_1990 of Pectobacterium carotovorum subsp. carotovorum (strain PC1).